Consider the following 248-residue polypeptide: Triosephosphate isomerase (248 aa).

Residue 9–11 (NWK) coordinates substrate. H94 functions as the Electrophile in the catalytic mechanism. E166 serves as the catalytic Proton acceptor. Residues G172, S212, and 233 to 234 (GG) each bind substrate.

Belongs to the triosephosphate isomerase family. As to quaternary structure, homodimer.

The protein localises to the cytoplasm. It catalyses the reaction D-glyceraldehyde 3-phosphate = dihydroxyacetone phosphate. The protein operates within carbohydrate biosynthesis; gluconeogenesis. Its pathway is carbohydrate degradation; glycolysis; D-glyceraldehyde 3-phosphate from glycerone phosphate: step 1/1. In terms of biological role, involved in the gluconeogenesis. Catalyzes stereospecifically the conversion of dihydroxyacetone phosphate (DHAP) to D-glyceraldehyde-3-phosphate (G3P). In Thermoanaerobacter sp. (strain X514), this protein is Triosephosphate isomerase.